Here is a 261-residue protein sequence, read N- to C-terminus: Putative hydro-lyase Nther_1142 (261 aa).

The protein belongs to the D-glutamate cyclase family.

In Natranaerobius thermophilus (strain ATCC BAA-1301 / DSM 18059 / JW/NM-WN-LF), this protein is Putative hydro-lyase Nther_1142.